The following is a 63-amino-acid chain: Small integral membrane protein 43 (63 aa).

2 important for interaction with SLC2A1 and SLC2A3 regions span residues 7–29 (LLLYLALFFFLLFLLFLLLFVVI) and 51–57 (HREPWGF). A helical membrane pass occupies residues 9–29 (LYLALFFFLLFLLFLLLFVVI).

Interacts with glucose transporters SLC2A1/GLUT1 and SLC2A3/GLUT3; the interactions may promote SLC2A1- and SLC2A3-mediated glucose transport to meet the energy needs of mesendoderm differentiation. Accumulates in the posterior primitive streak of mid-gastrulation embryos at 7.0 dpc. In the adult, highly abundant and enriched in the brain compared to other organs.

It is found in the cell membrane. In terms of biological role, required for mesendoderm differentiation. Interacts with glucose transporters and promotes glucose uptake. Probably augments the glucose uptake capacity of glucose transporter proteins to meet the energy needs of mesendoderm differentiation. This is Small integral membrane protein 43 from Mus musculus (Mouse).